The following is a 230-amino-acid chain: Orotidine 5'-phosphate decarboxylase (230 aa).

Residues Asp-16, Lys-38, 65–74 (DLKLHDIGNT), Thr-119, Arg-180, Gln-189, Gly-209, and Arg-210 each bind substrate. The Proton donor role is filled by Lys-67.

It belongs to the OMP decarboxylase family. Type 1 subfamily. As to quaternary structure, homodimer.

It catalyses the reaction orotidine 5'-phosphate + H(+) = UMP + CO2. Its pathway is pyrimidine metabolism; UMP biosynthesis via de novo pathway; UMP from orotate: step 2/2. Catalyzes the decarboxylation of orotidine 5'-monophosphate (OMP) to uridine 5'-monophosphate (UMP). The polypeptide is Orotidine 5'-phosphate decarboxylase (Methylobacterium radiotolerans (strain ATCC 27329 / DSM 1819 / JCM 2831 / NBRC 15690 / NCIMB 10815 / 0-1)).